We begin with the raw amino-acid sequence, 242 residues long: Small ribosomal subunit protein uS2 (242 aa).

The protein belongs to the universal ribosomal protein uS2 family.

The sequence is that of Small ribosomal subunit protein uS2 from Neisseria meningitidis serogroup B (strain ATCC BAA-335 / MC58).